The chain runs to 701 residues: Rab-like protein 6 (701 aa).

At Met-1 the chain carries N-acetylmethionine. The small GTPase-like stretch occupies residues 39–279; sequence GVQYNMKIVI…IFLEMMEARS (241 aa). GTP-binding positions include 50 to 57, 100 to 104, and 177 to 179; these read GDRNTGKT, DVVDK, and YRD. The segment at 279–701 is disordered; sequence SRGHASPLTT…LRGGGDYEAL (423 aa). Residues 284-315 are compositionally biased toward low complexity; sequence SPLTTSGQSPSSGSQSPVVPPSTVSTGSSSPS. Residues 316–344 are compositionally biased toward pro residues; sequence TPQPVLQPPLQAPPAPPAPAEAPPLPAAP. Residues Ser-394, Ser-416, Ser-418, Ser-461, and Ser-462 each carry the phosphoserine modification. A compositionally biased stretch (low complexity) spans 495 to 506; the sequence is ALGPPRDAAPRA. Phosphoserine is present on Ser-552. The span at 555-569 shows a compositional bias: basic and acidic residues; that stretch reads DAQRRAGEFPVREDL. Position 570 is a phosphoserine (Ser-570). Thr-573 carries the post-translational modification Phosphothreonine. Residues 580–589 show a composition bias toward pro residues; that stretch reads VQPPAPPKPL. The span at 608-626 shows a compositional bias: basic and acidic residues; the sequence is EPGREDSSEQDKEGRPPAK. Phosphoserine is present on residues Ser-614 and Ser-615. The tract at residues 629-667 is interaction with CDKN2A; the sequence is KKKKKKGREEEDKAAKKRSKHKKSRERADDKGRDERRRR. The span at 643–653 shows a compositional bias: basic residues; sequence AKKRSKHKKSR. The span at 654–665 shows a compositional bias: basic and acidic residues; that stretch reads ERADDKGRDERR. The span at 683-701 shows a compositional bias: gly residues; it reads LGGGAPSGPLRGGGDYEAL.

This sequence belongs to the small GTPase superfamily. Rab family.

It localises to the nucleus. The protein resides in the cytoplasm. May enhance cellular proliferation. May reduce growth inhibitory activity of CDKN2A. In Bos taurus (Bovine), this protein is Rab-like protein 6 (RABL6).